The following is a 291-amino-acid chain: UPF0276 protein VV3194 (291 aa).

The protein belongs to the UPF0276 family.

In Vibrio vulnificus (strain YJ016), this protein is UPF0276 protein VV3194.